A 439-amino-acid chain; its full sequence is UPF0597 protein Dalk_4447 (439 aa).

The protein belongs to the UPF0597 family.

The polypeptide is UPF0597 protein Dalk_4447 (Desulfatibacillum aliphaticivorans).